Reading from the N-terminus, the 441-residue chain is tRNA modification GTPase MnmE (441 aa).

Positions 22, 80, and 118 each coordinate (6S)-5-formyl-5,6,7,8-tetrahydrofolate. The TrmE-type G domain maps to 213-366 (GIYIAIVGEP…LLNLIKQRVE (154 aa)). Residues 223-228 (NSGKST), 242-248 (SEYAGTT), and 267-270 (DTAG) each bind GTP. Positions 227 and 248 each coordinate Mg(2+). Position 441 (lysine 441) interacts with (6S)-5-formyl-5,6,7,8-tetrahydrofolate.

The protein belongs to the TRAFAC class TrmE-Era-EngA-EngB-Septin-like GTPase superfamily. TrmE GTPase family. Homodimer. Heterotetramer of two MnmE and two MnmG subunits. Requires K(+) as cofactor.

The protein resides in the cytoplasm. Its function is as follows. Exhibits a very high intrinsic GTPase hydrolysis rate. Involved in the addition of a carboxymethylaminomethyl (cmnm) group at the wobble position (U34) of certain tRNAs, forming tRNA-cmnm(5)s(2)U34. In Ehrlichia canis (strain Jake), this protein is tRNA modification GTPase MnmE.